The sequence spans 151 residues: Superoxide dismutase [Cu-Zn] 4 (151 aa).

Histidine 45, histidine 47, and histidine 62 together coordinate Cu cation. Cysteine 56 and cysteine 145 are oxidised to a cystine. Zn(2+) is bound by residues histidine 62, histidine 70, histidine 79, and aspartate 82. Residue histidine 120 coordinates Cu cation.

This sequence belongs to the Cu-Zn superoxide dismutase family. As to quaternary structure, homodimer. It depends on Cu cation as a cofactor. The cofactor is Zn(2+).

It is found in the cytoplasm. The enzyme catalyses 2 superoxide + 2 H(+) = H2O2 + O2. Destroys radicals which are normally produced within the cells and which are toxic to biological systems. Protects spores from cellular damage caused by UV LIGHT. The protein is Superoxide dismutase [Cu-Zn] 4 (sodD) of Dictyostelium discoideum (Social amoeba).